A 270-amino-acid chain; its full sequence is Urease accessory protein UreD (270 aa).

It belongs to the UreD family. In terms of assembly, ureD, UreF and UreG form a complex that acts as a GTP-hydrolysis-dependent molecular chaperone, activating the urease apoprotein by helping to assemble the nickel containing metallocenter of UreC. The UreE protein probably delivers the nickel.

The protein resides in the cytoplasm. Its function is as follows. Required for maturation of urease via the functional incorporation of the urease nickel metallocenter. The sequence is that of Urease accessory protein UreD from Actinobacillus pleuropneumoniae serotype 7 (strain AP76).